Consider the following 639-residue polypeptide: MEPAMEPETLEARINRATNPLNKELDWASINGFCEQLNEDFEGPPLATRLLAHKIQSPQEWEAIQALTVLETCMKSCGKRFHDEVGKFRFLNELIKVVSPKYLGSRTSEKVKNKILELLYSWTVGLPEEVKIAEAYQMLKKQGIVKSDPKLPDDTTFPLPPPRPKNVIFEDEEKSKMLARLLKSSHPEDLRAANKLIKEMVQEDQKRMEKISKRVNAIEEVNNNVKLLTEMVMSHSQGGAAAGSSEDLMKELYQRCERMRPTLFRLASDTEDNDEALAEILQANDNLTQVINLYKQLVRGEEVNGDATAGSIPGSTSALLDLSGLDLPPAGTTYPAMPTRPGEQASPEQPSASVSLLDDELMSLGLSDPTPPSGPSLDGTGWNSFQSSDATEPPAPALAQAPSMESRPPAQTSLPASSGLDDLDLLGKTLLQQSLPPESQQVRWEKQQPTPRLTLRDLQNKSSSCSSPSSSATSLLHTVSPEPPRPPQQPVPTELSLASITVPLESIKPSNILPVTVYDQHGFRILFHFARDPLPGRSDVLVVVVSMLSTAPQPIRNIVFQSAVPKVMKVKLQPPSGTELPAFNPIVHPSAITQVLLLANPQKEKVRLRYKLTFTMGDQTYNEMGDVDQFPPPETWGSL.

Met1 bears the N-acetylmethionine mark. In terms of domain architecture, VHS spans 17–147 (ATNPLNKELD…MLKKQGIVKS (131 aa)). The interval 114 to 274 (KILELLYSWT…RLASDTEDND (161 aa)) is interaction with ARF3. The 129-residue stretch at 171–299 (DEEKSKMLAR…VINLYKQLVR (129 aa)) folds into the GAT domain. The residue at position 185 (Ser185) is a Phosphoserine. A unstructured hinge region spans residues 300–509 (GEEVNGDATA…ITVPLESIKP (210 aa)). Disordered regions lie at residues 320–421 (LDLS…SGLD) and 434–492 (SLPP…QPVP). Position 355 is a phosphoserine; by CK2 (Ser355). Positions 358–362 (DDELM) match the Autoinhibitory motif. Polar residues predominate over residues 381–390 (GWNSFQSSDA). Position 418 is a phosphoserine (Ser418). Over residues 462-480 (SSSCSSPSSSATSLLHTVS) the composition is skewed to low complexity. The span at 481–490 (PEPPRPPQQP) shows a compositional bias: pro residues. A GAE domain is found at 510 to 631 (SNILPVTVYD…NEMGDVDQFP (122 aa)).

Belongs to the GGA protein family. As to quaternary structure, monomer. Interacts with GGA2 and GGA3. Binds to clathrin and activated ARFs, including ARF1, ARF5 and ARF6. Interacts with RABEP1. Interacts with RABGEF1. Interacts with the type-I membrane proteins LRP3, M6PR/CD-MPR and IGF2R/CI-MPR. Interacts (via N-terminal VHS domain) with SORL1/sorLA and SORT1 (via C-terminal cytosolic domain). Interacts with EPN4. Interacts with CCDC91. Interacts with HEATR5B/p200a. Interacts with SYNRG/gamma-synergin. Interacts (via GAE doamin) with NECAP1 and NECAP2. Interacts (via GAE domain) with AFTPH/aftiphilin. Interacts with TSG101 and UBC. Interacts with RNF11. Interacts (via VHS domain) with BACE1 (via DXXLL motif); the interaction highly increases when BACE1 is phosphorylated at 'Ser-498'. Interacts with CNST. Interacts with ADRA2B. Interacts with ARL3; the interaction recruits, in collaboration with RABEP1, PKD1:PKD2 complex to trans-Golgi network and is required for ciliary targeting. In terms of processing, phosphorylated by CK2 and dephosphorylated by PP2A. Phosphorylation of GGA1 allows the internal DXXLL motif to bind the VHS domain and to inhibit the recognition of cargo signals. Post-translationally, ubiquitinated. As to expression, ubiquitously expressed.

Its subcellular location is the golgi apparatus. It localises to the trans-Golgi network membrane. It is found in the endosome membrane. The protein resides in the early endosome membrane. In terms of biological role, plays a role in protein sorting and trafficking between the trans-Golgi network (TGN) and endosomes. Mediates the ARF-dependent recruitment of clathrin to the TGN and binds ubiquitinated proteins and membrane cargo molecules with a cytosolic acidic cluster-dileucine (DXXLL) motif. Mediates export of the GPCR receptor ADRA2B to the cell surface. Required for targeting PKD1:PKD2 complex from the trans-Golgi network to the cilium membrane. Regulates retrograde transport of proteins such as phosphorylated form of BACE1 from endosomes to the trans-Golgi network. The chain is ADP-ribosylation factor-binding protein GGA1 (GGA1) from Homo sapiens (Human).